We begin with the raw amino-acid sequence, 130 residues long: P antigen family member 5 (130 aa).

2 disordered regions span residues 1–88 and 101–130; these read MQAP…TDVE and DAPGDGPDVREGTLPTFDPTKVLEAGEGQL. A compositionally biased stretch (basic and acidic residues) spans 14–26; the sequence is TREEVRDMSEHVT. Residues 27-42 are compositionally biased toward polar residues; the sequence is RSQSSERGNDQESSQP. Residues threonine 113 and threonine 116 each carry the phosphothreonine modification.

Belongs to the GAGE family.

This Homo sapiens (Human) protein is P antigen family member 5 (PAGE5).